The following is a 28-amino-acid chain: Short cationic peptide-1c (28 aa).

Glutamic acid 1-amide is present on E28.

In terms of tissue distribution, expressed by the venom gland.

It is found in the secreted. The protein is Short cationic peptide-1c of Cupiennius salei (American wandering spider).